An 80-amino-acid chain; its full sequence is Small ribosomal subunit protein uS17 (80 aa).

The protein belongs to the universal ribosomal protein uS17 family. In terms of assembly, part of the 30S ribosomal subunit.

Its function is as follows. One of the primary rRNA binding proteins, it binds specifically to the 5'-end of 16S ribosomal RNA. This is Small ribosomal subunit protein uS17 from Brucella abortus (strain S19).